We begin with the raw amino-acid sequence, 76 residues long: UPF0248 protein MmarC6_0667 (76 aa).

It belongs to the UPF0248 family.

The chain is UPF0248 protein MmarC6_0667 from Methanococcus maripaludis (strain C6 / ATCC BAA-1332).